The sequence spans 339 residues: Alcohol dehydrogenase notN (339 aa).

Zn(2+) is bound by residues Cys-44, His-65, Glu-66, Cys-99, Cys-102, Cys-110, and Cys-152. His-65 contributes to the an alcohol binding site. Residues 176–181 (GLGGLG), 196–201 (VAISRG), Lys-204, 263–265 (LSF), 287–289 (PSG), and 295–297 (EDA) contribute to the NAD(+) site.

Belongs to the zinc-containing alcohol dehydrogenase family. Requires Zn(2+) as cofactor.

It catalyses the reaction a primary alcohol + NAD(+) = an aldehyde + NADH + H(+). It carries out the reaction a secondary alcohol + NAD(+) = a ketone + NADH + H(+). Its function is as follows. Alcohol dehydrogenase; part of the gene cluster that mediates the biosynthesis of notoamide, a fungal indole alkaloid that belongs to a family of natural products containing a characteristic bicyclo[2.2.2]diazaoctane core. The first step of notoamide biosynthesis involves coupling of L-proline and L-tryptophan by the bimodular NRPS notE, to produce cyclo-L-tryptophan-L-proline called brevianamide F. The reverse prenyltransferase notF then acts as a deoxybrevianamide E synthase and converts brevianamide F to deoxybrevianamide E via reverse prenylation at C-2 of the indole ring leading to the bicyclo[2.2.2]diazaoctane core. Deoxybrevianamide E is further hydroxylated at C-6 of the indole ring, likely catalyzed by the cytochrome P450 monooxygenase notG, to yield 6-hydroxy-deoxybrevianamide E. 6-hydroxy-deoxybrevianamide E is a specific substrate of the prenyltransferase notC for normal prenylation at C-7 to produce 6-hydroxy-7-prenyl-deoxybrevianamide, also called notoamide S. As the proposed pivotal branching point in notoamide biosynthesis, notoamide S can be diverted to notoamide E through an oxidative pyran ring closure putatively catalyzed by either notH cytochrome P450 monooxygenase or the notD FAD-linked oxidoreductase. This step would be followed by an indole 2,3-epoxidation-initiated pinacol-like rearrangement catalyzed by the notB FAD-dependent monooxygenase leading to the formation of notoamide C and notoamide D. On the other hand notoamide S is converted to notoamide T by notH (or notD), a bifunctional oxidase that also functions as the intramolecular Diels-Alderase responsible for generation of (+)-notoamide T. To generate antipodal (-)-notoaminide T, notH' (or notD') in Aspergillus versicolor is expected to catalyze a Diels-Alder reaction leading to the opposite stereochemistry. The remaining oxidoreductase notD (or notH) likely catalyzes the oxidative pyran ring formation to yield (+)-stephacidin A. The FAD-dependent monooxygenase notI is highly similar to notB and is predicted to catalyze a similar conversion from (+)-stephacidin A to (-)-notoamide B via the 2,3-epoxidation of (+)-stephacidin A followed by a pinacol-type rearrangement. Finally, it remains unclear which enzyme could be responsible for the final hydroxylation steps leading to notoamide A and sclerotiamide. The function of notN in the notoamide biosynthesis has not been determined yet. This chain is Alcohol dehydrogenase notN, found in Aspergillus sp. (strain MF297-2).